Consider the following 209-residue polypeptide: Cytochrome bo(3) ubiquinol oxidase subunit 3 (209 aa).

Residues 1–29 lie on the Cytoplasmic side of the membrane; the sequence is MSTAVLNKHLADAHEVGHDHDHAHDSGGN. The helical transmembrane segment at 30-50 threads the bilayer; that stretch reads TVFGFWLYLMTDCVLFASVFA. At 51–72 the chain is on the periplasmic side; the sequence is TYAVLVHHTAGGPSGKDIFELP. The chain crosses the membrane as a helical span at residues 73 to 93; that stretch reads YVLVETAILLVSSCTYGLAML. Over 94–102 the chain is Cytoplasmic; sequence SAHKGAKGQ. Residues 103–123 traverse the membrane as a helical segment; sequence AIAWLGVTFLLGAAFIGMEIN. The Periplasmic segment spans residues 124 to 143; sequence EFHHLIAEGFGPSRSAFLSS. Residues 144-164 traverse the membrane as a helical segment; the sequence is FFTLVGMHGLHVSAGLLWMLV. The Cytoplasmic segment spans residues 165–186; the sequence is LMAQIWTRGLTAQNNTRMMCLS. Residues 187-207 form a helical membrane-spanning segment; it reads LFWHFLDIVWICVFTVVYLMG. The Periplasmic portion of the chain corresponds to 208-209; sequence AL.

It belongs to the cytochrome c oxidase subunit 3 family. As to quaternary structure, heterooctamer of two A chains, two B chains, two C chains and two D chains.

It is found in the cell inner membrane. Its function is as follows. Cytochrome bo(3) ubiquinol terminal oxidase is the component of the aerobic respiratory chain of E.coli that predominates when cells are grown at high aeration. Has proton pump activity across the membrane in addition to electron transfer, pumping 2 protons/electron. The chain is Cytochrome bo(3) ubiquinol oxidase subunit 3 (cyoC) from Pseudomonas aeruginosa (strain ATCC 15692 / DSM 22644 / CIP 104116 / JCM 14847 / LMG 12228 / 1C / PRS 101 / PAO1).